A 138-amino-acid chain; its full sequence is ATP synthase epsilon chain (138 aa).

Residues 88 to 119 (DREEARSTLSAAQARLDQSEQSEDKQERYEAQ) form a disordered region. Positions 109–119 (SEDKQERYEAQ) are enriched in basic and acidic residues.

Belongs to the ATPase epsilon chain family. In terms of assembly, F-type ATPases have 2 components, CF(1) - the catalytic core - and CF(0) - the membrane proton channel. CF(1) has five subunits: alpha(3), beta(3), gamma(1), delta(1), epsilon(1). CF(0) has three main subunits: a, b and c.

Its subcellular location is the cellular thylakoid membrane. Its function is as follows. Produces ATP from ADP in the presence of a proton gradient across the membrane. The polypeptide is ATP synthase epsilon chain (Acaryochloris marina (strain MBIC 11017)).